Reading from the N-terminus, the 243-residue chain is Beta-glucanase (243 aa).

A signal peptide spans 1–27; the sequence is MSYRVKRMLMLLVTGLFLSLSTFAASA. Residues 29–243 form the GH16 domain; it reads AQTGGSFYEP…SLHWVRYTKR (215 aa). A disulfide bridge links Cys61 with Cys90. Glu134 serves as the catalytic Nucleophile. Glu138 acts as the Proton donor in catalysis.

Belongs to the glycosyl hydrolase 16 family.

The enzyme catalyses Hydrolysis of (1-&gt;4)-beta-D-glucosidic linkages in beta-D-glucans containing (1-&gt;3)- and (1-&gt;4)-bonds.. The chain is Beta-glucanase (bg1) from Bacillus licheniformis.